Consider the following 434-residue polypeptide: UDP-N-acetylmuramoyl-L-alanyl-D-glutamate--2,6-diaminopimelate ligase (434 aa).

Ser17 is a UDP-N-acetyl-alpha-D-muramoyl-L-alanyl-D-glutamate binding site. ATP is bound at residue 68 to 74 (GTNGKTT). UDP-N-acetyl-alpha-D-muramoyl-L-alanyl-D-glutamate contacts are provided by residues 111 to 112 (TT), Ser138, Gln144, and Arg146. Residue Lys178 is modified to N6-carboxylysine. Meso-2,6-diaminopimelate-binding positions include Arg326, 350 to 353 (DNPR), Gly401, and Glu405. The Meso-diaminopimelate recognition motif motif lies at 350 to 353 (DNPR).

Belongs to the MurCDEF family. MurE subfamily. It depends on Mg(2+) as a cofactor. Post-translationally, carboxylation is probably crucial for Mg(2+) binding and, consequently, for the gamma-phosphate positioning of ATP.

The protein localises to the cytoplasm. It carries out the reaction UDP-N-acetyl-alpha-D-muramoyl-L-alanyl-D-glutamate + meso-2,6-diaminopimelate + ATP = UDP-N-acetyl-alpha-D-muramoyl-L-alanyl-gamma-D-glutamyl-meso-2,6-diaminopimelate + ADP + phosphate + H(+). Its pathway is cell wall biogenesis; peptidoglycan biosynthesis. Catalyzes the addition of meso-diaminopimelic acid to the nucleotide precursor UDP-N-acetylmuramoyl-L-alanyl-D-glutamate (UMAG) in the biosynthesis of bacterial cell-wall peptidoglycan. This chain is UDP-N-acetylmuramoyl-L-alanyl-D-glutamate--2,6-diaminopimelate ligase, found in Wolinella succinogenes (strain ATCC 29543 / DSM 1740 / CCUG 13145 / JCM 31913 / LMG 7466 / NCTC 11488 / FDC 602W) (Vibrio succinogenes).